Reading from the N-terminus, the 145-residue chain is Probable transport accessory protein MmpS2 (145 aa).

The chain crosses the membrane as a helical span at residues 11-31; it reads MWLLLAIVVVAVVGGLGIYRL.

Belongs to the MmpS family.

Its subcellular location is the cell membrane. This is Probable transport accessory protein MmpS2 (mmpS2) from Mycobacterium bovis (strain ATCC BAA-935 / AF2122/97).